The sequence spans 107 residues: Large ribosomal subunit protein uL24 (107 aa).

Belongs to the universal ribosomal protein uL24 family. In terms of assembly, part of the 50S ribosomal subunit.

In terms of biological role, one of two assembly initiator proteins, it binds directly to the 5'-end of the 23S rRNA, where it nucleates assembly of the 50S subunit. Its function is as follows. One of the proteins that surrounds the polypeptide exit tunnel on the outside of the subunit. The sequence is that of Large ribosomal subunit protein uL24 from Kosmotoga olearia (strain ATCC BAA-1733 / DSM 21960 / TBF 19.5.1).